Reading from the N-terminus, the 679-residue chain is uncharacterized protein (679 aa).

Transmembrane regions (helical) follow at residues 23 to 41, 46 to 65, 72 to 90, 94 to 113, 120 to 142, 157 to 179, 362 to 381, 385 to 404, 411 to 433, 438 to 455, 462 to 481, and 496 to 515; these read YALR…AYYL, PYWA…GGVI, IAGS…GHTL, WLFL…ACAH, YAFQ…IVEI, IVGI…GTAL, WSGV…SIGA, SGPG…SIVA, SLLM…GLMV, LWQF…MQLL, LAGL…AVTN, and AKIV…RPGS.

It belongs to the aromatic acid exporter ArAE (TC 2.A.85) family.

The protein localises to the cell membrane. This is an uncharacterized protein from Salmonella typhimurium (strain LT2 / SGSC1412 / ATCC 700720).